Reading from the N-terminus, the 249-residue chain is Thrombin-like enzyme barnettobin (249 aa).

Positions 1 to 10 (APKELQVSYA) are cleaved as a signal peptide. Residues 11–16 (HKSSEL) constitute a propeptide that is removed on maturation. The region spanning 17 to 240 (VIGGDECDIN…YPPWIQSIIA (224 aa)) is the Peptidase S1 domain. Cystine bridges form between C23/C154, C41/C57, C89/C247, C133/C201, C165/C180, and C191/C216. Residues H56 and D101 each act as charge relay system in the active site. N-linked (GlcNAc...) asparagine glycans are attached at residues N145 and N161. S195 functions as the Charge relay system in the catalytic mechanism. Residue N242 is glycosylated (N-linked (GlcNAc...) asparagine).

It belongs to the peptidase S1 family. Snake venom subfamily. As to quaternary structure, monomer. Glycoprotein, contains approx. 52% carbohydrate which could be removed by N-glycosidase. Glycosylation is important, since deglycosylated barnettobin loses its clotting and defibrinogenating effects. In terms of tissue distribution, expressed by the venom gland.

The protein resides in the secreted. Its activity is regulated as follows. Both coagulant and amidolytic activities are inhibited by PMSF. Amidolytic activity is partially inhibited by DTT, chymostatin, SBTI and TLCK, but not by heparin and EDTA. In terms of biological role, thrombin-like snake venom serine protease that releases only fibrinopeptide A from human Aalpha chain of fibrinogen (specific coagulant activity was 251.7 NIH thrombin units/mg). Also shows fibrino(geno)lytic activities in vitro and defibrinogenating effects in vivo. This is Thrombin-like enzyme barnettobin from Bothrops barnetti (Barnett's lancehead).